We begin with the raw amino-acid sequence, 212 residues long: Riboflavin kinase (212 aa).

Positions 1–87 are H-T-H motif-like; that stretch reads MKMKTLFLLI…YEEISTALYS (87 aa). Residues 88–212 are riboflavin kinase; the sequence is GFIVGEVISG…DGDKVRIEVV (125 aa). 97–102 contacts CDP; the sequence is GIGEGA. Positions 124 and 126 each coordinate Mg(2+). FMN is bound by residues Thr-180 and Glu-188. Residue 193–196 participates in CDP binding; sequence VKLR.

Belongs to the archaeal riboflavin kinase family. The cofactor is Mg(2+).

The enzyme catalyses riboflavin + CTP = CDP + FMN + H(+). Its pathway is cofactor biosynthesis; FMN biosynthesis; FMN from riboflavin (CTP route): step 1/1. Its function is as follows. Catalyzes the CTP-dependent phosphorylation of riboflavin (vitamin B2) to form flavin mononucleotide (FMN). The sequence is that of Riboflavin kinase (ribK) from Pyrococcus abyssi (strain GE5 / Orsay).